The primary structure comprises 60 residues: MAVPKRRTSRWRRNQRRAQAFFAKLKSFNMVKCPNCGEFAMPHRACPYCGYYRDKQVLEV.

This sequence belongs to the bacterial ribosomal protein bL32 family.

This chain is Large ribosomal subunit protein bL32, found in Hydrogenobaculum sp. (strain Y04AAS1).